We begin with the raw amino-acid sequence, 956 residues long: Calsyntenin-3 (956 aa).

The first 19 residues, 1-19, serve as a signal peptide directing secretion; sequence MTLLLVSLLLASLLQISSG. At 1-21 the chain is on the cytoplasmic side; the sequence is MTLLLVSLLLASLLQISSGNK. Residues 20 to 847 lie on the Extracellular side of the membrane; sequence NKANKHKPWI…SHRNSMVPSA (828 aa). Positions 22–42 form an intramembrane region, helical; the sequence is ANKHKPWIEAEYQGIVMENDN. Cadherin domains lie at 29-145 and 146-246; these read IEAE…APVF and VERL…KPSW. Over 43-73 the chain is Cytoplasmic; it reads TVLLNPPLFALDKDAPLRYAGEICGFRLHGS. The segment at residues 74-94 is an intramembrane region (helical); it reads GVPFEAVILDKATGEGLIRAK. The Cytoplasmic portion of the chain corresponds to 95 to 139; that stretch reads EPVDCEAQKEHTFTIQAYDCGEGPDGTNTKKSHKATVHVRVNDVN. An intramembrane region (helical) is located at residues 140–160; sequence EFAPVFVERLYRAAVTEGKLY. The Cytoplasmic segment spans residues 161-248; that stretch reads DRILRVEAID…KPTCKPSWQG (88 aa). Residues 249–269 form a helical membrane-spanning segment; that stretch reads WNKRIEYAPGAGSLALFPGIR. The Lumenal portion of the chain corresponds to 270-357; it reads LETCDEPLWN…GTQAVQVPLG (88 aa). Asn299, Asn327, Asn347, Asn507, and Asn740 each carry an N-linked (GlcNAc...) asparagine glycan. A helical transmembrane segment spans residues 848–868; sequence ATLIIVVCVGFLVLMVILGLV. Residues 869-956 are Cytoplasmic-facing; sequence RIHSLHRRVS…RIIESPPHRY (88 aa). Residues 916-956 form a disordered region; sequence QTCVAGVAGGQQEEEDSSDSEAADSPSSDERRIIESPPHRY. A compositionally biased stretch (acidic residues) spans 927-937; sequence QEEEDSSDSEA. A compositionally biased stretch (basic and acidic residues) spans 943–956; the sequence is SDERRIIESPPHRY.

The protein belongs to the calsyntenin family. In terms of assembly, interacts (via cadherin domains) with both alpha and beta isoforms of neurexins (NRXN1, NRXN2 and NRXN3). Directly interacts with APBA2. Forms a tripartite complex with APBA2 and APP. Interacts with low affinity with KLC1. Interacts with SLC23A2/SVCT2. As to quaternary structure, interacts with CIDEA; inhibiting the lipid transferase activity of CIDEA. Interacts with CIDEC; inhibiting the lipid transferase activity of CIDEC. In terms of processing, proteolytically processed under normal cellular conditions. A primary zeta-cleavage generates a large extracellular (soluble) N-terminal domain (sAlc) and a short C-terminal transmembrane fragment (CTF1). A secondary cleavage catalyzed by gamma-secretase within the transmembrane domain releases the beta-Alc-beta chain in the extracellular milieu and produces an intracellular fragment (AlcICD). This processing is strongly suppressed in the tripartite complex formed with APBA2 and APP, which seems to prevent the association with gamma-secretase. Ubiquitinated: endoplasmic reticulum-localized protein is ubiquitinated and degraded by the endoplasmic reticulum-associated degradation (ERAD) pathway. In terms of tissue distribution, restricted to the brain (at protein level). In the cerebral cortex, found in the somas and neuropil of all layers. Expressed at highest levels in neurons of cortical layer 5 and, at lower levels, in neurons of the upper layers. Highly expressed in Purkinje cells. Also found in a few scattered interneurons throughout the granule cell layer and occasionally in neurons in the molecular layer (at protein level). In all layers, high levels in a subpopulation of presumptive GABAergic neurons (based on morphology). As to expression, expression is restricted to adipose tissue, with high expression in thermogenic adipocytes (brown adipose tissue).

Its subcellular location is the postsynaptic cell membrane. It is found in the endoplasmic reticulum membrane. The protein localises to the golgi apparatus membrane. The protein resides in the cell projection. It localises to the dendrite. Its subcellular location is the lipid droplet. Postsynaptic adhesion molecule that binds to presynaptic neurexins to mediate both excitatory and inhibitory synapse formation. Promotes synapse development by acting as a cell adhesion molecule at the postsynaptic membrane, which associates with both neurexin-alpha and neurexin-beta proteins at the presynaptic membrane. Regulates the balance between excitatory and inhibitory synapses by inhibiting formation of excitatory parallel-fiber synapses and promoting formation of inhibitory synapses in the same neuron. May also be involved in ascorbate (vitamin C) uptake via its interaction with SLC23A2/SVCT2. Complex formation with APBA2 and APP, stabilizes APP metabolism and enhances APBA2-mediated suppression of beta-APP40 secretion, due to the retardation of intracellular APP maturation. Functionally, adipose-specific isoform that plays a key role in adaptive thermogenesis. Facilitates the efficient use of stored triglyceride by promoting multilocular morphology of thermogenic adipocytes: acts by inhibiting the activity of CIDEA and CIDEC on lipid droplets, thereby preventing lipid droplet fusion and facilitating lipid utilization. May also participate in adaptive thermogenesis by promoting sympathetic innervation of thermogenic adipose tissue: acts by driving secretion of neurotrophic factor S100B from brown adipocytes, stimulating neurite outgrowth from sympathetic neurons. The protein is Calsyntenin-3 of Mus musculus (Mouse).